We begin with the raw amino-acid sequence, 144 residues long: Large ribosomal subunit protein uL15 (144 aa).

Residues 1–57 form a disordered region; the sequence is MKLNDLSPAPGSRREKHRPGRGIGSGLGKTGGRGHKGQTSRSGGSIAPGFEGGQQPL. Gly residues predominate over residues 21–31; sequence RGIGSGLGKTG.

This sequence belongs to the universal ribosomal protein uL15 family. In terms of assembly, part of the 50S ribosomal subunit.

Binds to the 23S rRNA. The sequence is that of Large ribosomal subunit protein uL15 from Pseudomonas entomophila (strain L48).